The primary structure comprises 112 residues: ATP synthase epsilon chain (112 aa).

The protein belongs to the ATPase epsilon chain family. As to quaternary structure, F-type ATPases have 2 components, CF(1) - the catalytic core - and CF(0) - the membrane proton channel. CF(1) has five subunits: alpha(3), beta(3), gamma(1), delta(1), epsilon(1). CF(0) has three main subunits: a, b and c.

It localises to the cell inner membrane. Produces ATP from ADP in the presence of a proton gradient across the membrane. The sequence is that of ATP synthase epsilon chain (atpC) from Rickettsia conorii (strain ATCC VR-613 / Malish 7).